A 314-amino-acid polypeptide reads, in one-letter code: L-lactate dehydrogenase 1 (314 aa).

NAD(+) is bound by residues Val-16, Asp-37, Lys-42, Tyr-68, and 82-83; that span reads GL. Substrate-binding positions include Gln-85, Arg-91, and 123 to 126; that span reads NPVD. Residues 121–123 and Ser-146 each bind NAD(+); that span reads ATN. 151–154 is a binding site for substrate; sequence DSAR. Beta-D-fructose 1,6-bisphosphate-binding residues include Arg-156 and His-171. The Proton acceptor role is filled by His-178. At Tyr-223 the chain carries Phosphotyrosine. Position 232 (Thr-232) interacts with substrate.

It belongs to the LDH/MDH superfamily. LDH family. As to quaternary structure, homotetramer.

It is found in the cytoplasm. It catalyses the reaction (S)-lactate + NAD(+) = pyruvate + NADH + H(+). It participates in fermentation; pyruvate fermentation to lactate; (S)-lactate from pyruvate: step 1/1. With respect to regulation, allosterically activated by fructose 1,6-bisphosphate (FBP). Functionally, catalyzes the conversion of lactate to pyruvate. The protein is L-lactate dehydrogenase 1 of Bacillus cereus (strain ATCC 14579 / DSM 31 / CCUG 7414 / JCM 2152 / NBRC 15305 / NCIMB 9373 / NCTC 2599 / NRRL B-3711).